The primary structure comprises 455 residues: Ectonucleoside triphosphate diphosphohydrolase 6 (455 aa).

The Cytoplasmic portion of the chain corresponds to 1–12; the sequence is MRKIPNHGTLRM. A helical membrane pass occupies residues 13–32; the sequence is TKVAYPLGLCVGLFIYVAYI. The Lumenal portion of the chain corresponds to 33 to 455; that stretch reads KWHRASAAQA…SLKRQKVPAL (423 aa). Residue E196 is the Proton acceptor of the active site. 2 cysteine pairs are disulfide-bonded: C297/C327 and C387/C401.

The protein belongs to the GDA1/CD39 NTPase family. The cofactor is Mg(2+). Ca(2+) serves as cofactor. In terms of processing, N-glycosylated.

It is found in the golgi apparatus membrane. Its subcellular location is the secreted. The protein resides in the cell membrane. It catalyses the reaction a ribonucleoside 5'-diphosphate + H2O = a ribonucleoside 5'-phosphate + phosphate + H(+). It carries out the reaction IDP + H2O = IMP + phosphate + H(+). The catalysed reaction is GDP + H2O = GMP + phosphate + H(+). The enzyme catalyses UDP + H2O = UMP + phosphate + H(+). Functionally, catalyzes the hydrolysis of nucleoside triphosphates and diphosphates in a calcium- or magnesium-dependent manner. Has a strong preference for nucleoside diphosphates, preferentially hydrolyzes GDP, IDP, and UDP, with slower hydrolysis of CDP, ITP, GTP, CTP, ADP, and UTP and virtually no hydrolysis of ATP. The membrane bound form might support glycosylation reactions in the Golgi apparatus and, when released from cells, might catalyze the hydrolysis of extracellular nucleotides. In Mus musculus (Mouse), this protein is Ectonucleoside triphosphate diphosphohydrolase 6.